We begin with the raw amino-acid sequence, 809 residues long: Ubiquitin carboxyl-terminal hydrolase 1 (809 aa).

The region spanning 101 to 738 is the USP domain; that stretch reads AGLVNDGNTC…GVFMLFYEYD (638 aa). Catalysis depends on Cys-110, which acts as the Nucleophile. The segment at 143–195 is disordered; it reads NEHNEEGNGQESAQDEATHKKNTRKGGKVYGKHKKKLNRKSSSKEDEEKSQEP. Residues 162 to 183 are compositionally biased toward basic residues; that stretch reads KKNTRKGGKVYGKHKKKLNRKS. Residues 184 to 194 are compositionally biased toward basic and acidic residues; that stretch reads SSKEDEEKSQE. Residues Ser-530, Ser-531, and Ser-555 each carry the phosphoserine modification. The segment at 569–596 is disordered; sequence ASHYNHTKDISNYDPLNGEVDGVTSDDE. Ser-618 and Ser-638 each carry phosphoserine. Thr-652 carries the post-translational modification Phosphothreonine. A phosphoserine mark is found at Ser-653, Ser-654, and Ser-670. Residue His-697 is the Proton acceptor of the active site. A disordered region spans residues 750–809; the sequence is LEAIQSNNEEDDEKEQEQKGVQEPKESQEQGEGEEQEEGQEQMKFERTEDHRDISGKDVN. Residue Ser-755 is modified to Phosphoserine. Over residues 765-777 the composition is skewed to basic and acidic residues; the sequence is QEQKGVQEPKESQ. Acidic residues predominate over residues 778-789; the sequence is EQGEGEEQEEGQ. Residues 790 to 809 are compositionally biased toward basic and acidic residues; it reads EQMKFERTEDHRDISGKDVN.

It belongs to the peptidase C19 family.

It catalyses the reaction Thiol-dependent hydrolysis of ester, thioester, amide, peptide and isopeptide bonds formed by the C-terminal Gly of ubiquitin (a 76-residue protein attached to proteins as an intracellular targeting signal).. In terms of biological role, has an ATP-independent isopeptidase activity, cleaving at the C-terminus of the ubiquitin moiety in natural or engineered linear fusion proteins, irrespective of their size or the presence of an N-terminal extension to ubiquitin. This Saccharomyces cerevisiae (strain ATCC 204508 / S288c) (Baker's yeast) protein is Ubiquitin carboxyl-terminal hydrolase 1 (UBP1).